Consider the following 372-residue polypeptide: MSHNTFGHLFRVTTWGESHGPALGCVVDGCPPGIALTAEMIQVFLDKRRPGNGKFVTQRQEPDAVRILSGVFEDARSNGQRTTGTPISLMIENTDQRSKDYSEIAQAFRPGHADYAYFAKYGVRDYRGGGRSSARETAARVAAGAVARLIIPGVTVRAALVQIGPHKIDRSNWDWAQTEQNPYWSPDAAIVPVWEEHLEKIRKAGSSTGAVVEVEATGVPAGWGAPLYAKLDAELAAALMSINAAKGVEIGDGFDSAALTGEDNADTMRMGDDGQPVFQSNHAGGILGGISSGQPIVARVAFKPTSSILIPRETVNEAGEEIELRTKGRHDPCVGIRGVPVVEAMTACVLADAFLRHRGQTGREHFPLGASA.

Residue R48 coordinates NADP(+). Residues R131–S133, N243–A244, G288, K303–S307, and R329 contribute to the FMN site.

The protein belongs to the chorismate synthase family. In terms of assembly, homotetramer. Requires FMNH2 as cofactor.

It carries out the reaction 5-O-(1-carboxyvinyl)-3-phosphoshikimate = chorismate + phosphate. Its pathway is metabolic intermediate biosynthesis; chorismate biosynthesis; chorismate from D-erythrose 4-phosphate and phosphoenolpyruvate: step 7/7. Its function is as follows. Catalyzes the anti-1,4-elimination of the C-3 phosphate and the C-6 proR hydrogen from 5-enolpyruvylshikimate-3-phosphate (EPSP) to yield chorismate, which is the branch point compound that serves as the starting substrate for the three terminal pathways of aromatic amino acid biosynthesis. This reaction introduces a second double bond into the aromatic ring system. The polypeptide is Chorismate synthase (Caulobacter vibrioides (strain ATCC 19089 / CIP 103742 / CB 15) (Caulobacter crescentus)).